A 114-amino-acid chain; its full sequence is uncharacterized protein (114 aa).

The next 2 membrane-spanning stretches (helical) occupy residues 58 to 78 and 94 to 114; these read CLLG…FFLL and SISY…FCLA.

The protein localises to the membrane. This is an uncharacterized protein from Saccharomyces cerevisiae (strain ATCC 204508 / S288c) (Baker's yeast).